Reading from the N-terminus, the 474-residue chain is Trehalose-6-phosphate synthase (474 aa).

D-glucose 6-phosphate is bound at residue R10. Position 22 to 23 (22 to 23 (GG)) interacts with UDP-alpha-D-glucose. Y77 and D131 together coordinate D-glucose 6-phosphate. Residues R263 and K268 each contribute to the UDP-alpha-D-glucose site. R301 provides a ligand contact to D-glucose 6-phosphate. UDP-alpha-D-glucose-binding positions include F340 and 366 to 370 (LVAKE).

The protein belongs to the glycosyltransferase 20 family. In terms of assembly, homotetramer.

It catalyses the reaction D-glucose 6-phosphate + UDP-alpha-D-glucose = alpha,alpha-trehalose 6-phosphate + UDP + H(+). The protein operates within glycan biosynthesis; trehalose biosynthesis. Functionally, probably involved in the osmoprotection via the biosynthesis of trehalose. Catalyzes the transfer of glucose from UDP-alpha-D-glucose (UDP-Glc) to D-glucose 6-phosphate (Glc-6-P) to form trehalose-6-phosphate. Acts with retention of the anomeric configuration of the UDP-sugar donor. This Cronobacter sakazakii (strain ATCC BAA-894) (Enterobacter sakazakii) protein is Trehalose-6-phosphate synthase.